Consider the following 337-residue polypeptide: Inner membrane protein YhjD (337 aa).

A compositionally biased stretch (basic and acidic residues) spans 1-29 (MTQENEIKRPIQDLEHEPIKPLDNSEKGS). Positions 1-31 (MTQENEIKRPIQDLEHEPIKPLDNSEKGSKV) are disordered. The Cytoplasmic portion of the chain corresponds to 1–74 (MTQENEIKRP…LGNQFGAAIT (74 aa)). Residues 75–97 (YFSFLSMIPILMVSFAAGGFVLA) form a helical membrane-spanning segment. The Periplasmic portion of the chain corresponds to 98 to 133 (SHPMLLQDIFDKILQNISDPTLAATLKNTINTAVQQ). Residues 134-156 (RTTVGLVGLAVALYSGINWMGNL) form a helical membrane-spanning segment. Over 157 to 185 (REAIRAQSRDVWERSPQDQEKFWVKYLRD) the chain is Cytoplasmic. The helical transmembrane segment at 186–208 (FISLIGLLIALIVTLSITSVAGS) threads the bilayer. Over 209-227 (AQQMIISALHLNSIEWLKP) the chain is Periplasmic. Residues 228 to 250 (TWRLIGLAISIFANYLLFFWIFW) traverse the membrane as a helical segment. At 251–261 (RLPRHRPRKKA) the chain is on the cytoplasmic side. The helical transmembrane segment at 262-284 (LIRGTFLAAIGFEVIKIVMTYTL) threads the bilayer. The Periplasmic portion of the chain corresponds to 285 to 298 (PSLMKSPSGAAFGS). Residues 299-321 (VLGLMAFFYFFARLTLFCAAWIA) traverse the membrane as a helical segment. The Cytoplasmic portion of the chain corresponds to 322-337 (TAEYKDDPRMPGKTQP).

The protein resides in the cell inner membrane. The polypeptide is Inner membrane protein YhjD (yhjD) (Escherichia coli (strain K12)).